Reading from the N-terminus, the 657-residue chain is uncharacterized protein (657 aa).

Positions 1–26 (MFGKGLVKKSLLFFSGVSTMAVFLVS) are cleaved as a signal peptide. A lipid anchor (N-palmitoyl cysteine) is attached at cysteine 27. Cysteine 27 carries the S-diacylglycerol cysteine lipid modification. Disordered regions lie at residues 291-316 (ISPK…FSST), 468-496 (RLSS…DGII), and 516-563 (KSMT…KETN). Residues 294–304 (KQGSDNNSNLS) show a composition bias toward polar residues. Positions 469–495 (LSSDDTNTKKALKEVSTHKNGSDKDGI) are enriched in basic and acidic residues. Polar residues predominate over residues 516–525 (KSMTDNNSGT). A compositionally biased stretch (basic and acidic residues) spans 526 to 545 (EQKKNLSEVDTKKKEKESKG). Residues 546–559 (KTQSNGQDSGQQNG) show a composition bias toward low complexity.

To T.pallidum TmpC.

It is found in the cell membrane. This is an uncharacterized protein from Mycoplasma pneumoniae (strain ATCC 29342 / M129 / Subtype 1) (Mycoplasmoides pneumoniae).